Here is a 271-residue protein sequence, read N- to C-terminus: MTDLKTIIEEAYQNKDNFTTDTVPKKIHQAIHQTIELLDNGELRIAEKQNGQWNTNEWAKMAILLYFKTEPLKTFDAGYTFFYDKIPLKYTNNTSQPQSGVRVVPHAIVRKGAYLAPNTVLMPSYINIGAYVDSGTLIDTWATVGSCAQIGKNVHLSGGAGIGGVLEPLQAHPTIIEDDCFIGARSEIVEGVMVEKGSVISMGVFVGQSTPIYNRQTQEITYGRIPAGSVVIPGSLPSKDGHYNRYSAIIVKQVDKKTRSKVSLNELLREG.

Substrate is bound by residues R102 and D139.

This sequence belongs to the transferase hexapeptide repeat family. Homotrimer.

It is found in the cytoplasm. The catalysed reaction is (S)-2,3,4,5-tetrahydrodipicolinate + succinyl-CoA + H2O = (S)-2-succinylamino-6-oxoheptanedioate + CoA. It participates in amino-acid biosynthesis; L-lysine biosynthesis via DAP pathway; LL-2,6-diaminopimelate from (S)-tetrahydrodipicolinate (succinylase route): step 1/3. The polypeptide is 2,3,4,5-tetrahydropyridine-2,6-dicarboxylate N-succinyltransferase (Coxiella burnetii (strain RSA 331 / Henzerling II)).